Here is a 172-residue protein sequence, read N- to C-terminus: Shikimate kinase 2 (172 aa).

An ATP-binding site is contributed by 9-16 (GARAAGKT).

This sequence belongs to the shikimate kinase family.

Its subcellular location is the cytoplasm. The enzyme catalyses shikimate + ATP = 3-phosphoshikimate + ADP + H(+). It participates in metabolic intermediate biosynthesis; chorismate biosynthesis; chorismate from D-erythrose 4-phosphate and phosphoenolpyruvate: step 5/7. The protein is Shikimate kinase 2 of Syntrophotalea carbinolica (strain DSM 2380 / NBRC 103641 / GraBd1) (Pelobacter carbinolicus).